Here is a 591-residue protein sequence, read N- to C-terminus: V-type ATP synthase alpha chain (591 aa).

Residue 233–240 (GPFGAGKT) coordinates ATP.

Belongs to the ATPase alpha/beta chains family.

The catalysed reaction is ATP + H2O + 4 H(+)(in) = ADP + phosphate + 5 H(+)(out). Its function is as follows. Produces ATP from ADP in the presence of a proton gradient across the membrane. The V-type alpha chain is a catalytic subunit. The sequence is that of V-type ATP synthase alpha chain from Streptococcus pneumoniae (strain Hungary19A-6).